The sequence spans 117 residues: Gamma-aminobutyric acid receptor-associated protein-like 3 (117 aa).

Residues 1–22 (MKFQYKEVHPFEYRKKEGEKIR) are interaction with beta-tubulin. The segment at 36–68 (APKARVPDLDRRKYLVPSDLTDGQFYLLIRKRI) is interaction with GABRG2. A lipid anchor (Phosphatidylethanolamine amidated glycine) is attached at Gly116. Lys117 is a propeptide (removed in mature form).

Belongs to the ATG8 family. As to quaternary structure, interacts with GABRG2 and beta-tubulin. Post-translationally, the precursor molecule is cleaved by ATG4B to form the cytosolic form, GABARAPL3-I. This is activated by APG7L/ATG7, transferred to ATG3 and conjugated to phospholipid to form the membrane-bound form, GABARAPL3-II. ATG4B also mediates the delipidation required for GABARAPL1 recycling when autophagosomes fuse with lysosomes. In terms of tissue distribution, ubiquitous. Expressed at very high levels in the brain, heart, peripheral blood leukocytes, liver, kidney, placenta and skeletal muscle. Expressed at very low levels in thymus and small intestine.

The protein localises to the cytoplasm. It is found in the cytoskeleton. The protein resides in the cytoplasmic vesicle. Its subcellular location is the autophagosome membrane. In terms of biological role, ubiquitin-like modifier involved in autophagosome formation. Whereas LC3s are involved in elongation of the phagophore membrane, the GABARAP/GATE-16 subfamily is essential for a later stage in autophagosome maturation. This Homo sapiens (Human) protein is Gamma-aminobutyric acid receptor-associated protein-like 3 (GABARAPL3).